Here is a 255-residue protein sequence, read N- to C-terminus: Putative keratin-87 protein (255 aa).

The region spanning 1–255 is the IF rod domain; sequence MEANSGRLAS…SRGCVRALVL (255 aa). Coiled coils occupy residues 19–81 and 147–227; these read LEGY…EIRV and LRRT…VMNS.

Belongs to the intermediate filament family. As to quaternary structure, heterotetramer of two type I and two type II keratins.

The chain is Putative keratin-87 protein (KRT87P) from Homo sapiens (Human).